A 459-amino-acid polypeptide reads, in one-letter code: uncharacterized protein (459 aa).

It belongs to the Rab GDI family.

It is found in the cytoplasm. The protein localises to the nucleus. This is an uncharacterized protein from Schizosaccharomyces pombe (strain 972 / ATCC 24843) (Fission yeast).